A 45-amino-acid chain; its full sequence is Large ribosomal subunit protein bL34 (45 aa).

The tract at residues 1–27 (MTKRTLGGTSRKRKRVSGFRVRMRSHT) is disordered. A compositionally biased stretch (basic residues) spans 10 to 27 (SRKRKRVSGFRVRMRSHT).

This sequence belongs to the bacterial ribosomal protein bL34 family.

This Synechococcus sp. (strain CC9902) protein is Large ribosomal subunit protein bL34.